Consider the following 269-residue polypeptide: Zinc import ATP-binding protein ZnuC (269 aa).

An ABC transporter domain is found at 6 to 221; the sequence is VRLTQVGVSF…PAFVELFGQD (216 aa). ATP is bound at residue 38-45; the sequence is GPNGAGKT.

This sequence belongs to the ABC transporter superfamily. Zinc importer (TC 3.A.1.15.5) family. In terms of assembly, the complex is composed of two ATP-binding proteins (ZnuC), two transmembrane proteins (ZnuB) and a solute-binding protein (ZnuA).

The protein localises to the cell inner membrane. It catalyses the reaction Zn(2+)(out) + ATP(in) + H2O(in) = Zn(2+)(in) + ADP(in) + phosphate(in) + H(+)(in). In terms of biological role, part of the ABC transporter complex ZnuABC involved in zinc import. Responsible for energy coupling to the transport system. The polypeptide is Zinc import ATP-binding protein ZnuC (Pseudomonas aeruginosa (strain UCBPP-PA14)).